We begin with the raw amino-acid sequence, 925 residues long: MITGLLKKVFGSRNERLIKQYRRTVAQINALEPKFEQLSDDELRGMTEAFRQRHAGGESLEALLPEAFAVCREASKRVMKMRHFDVQLIGGMVLNDNKIAEMRTGEGKTLTATLAVYLNAITGKGVHVVTVNDYLAQRDAEWMGRLYNFLGLSVGVNLSQMAHDQKQAAYNADITYGTNNEFGFDYLRDNMVYDPSQRVQRPLHYAIVDEVDSILIDEARTPLIISGQAENQTDLYQRMNGIPKLLERQIGEEKADGTGVEKPGDYYVDEKGHQVYLTEAGHEKAEEILSQLGLIGEGESLYAPQNITLMHHLYAALRAHSLFHRDQHYVVQNDEVVIVDEFTGRLMTGRRWSDGLHQAVEAKEGVTVQQENQTLATVTFQNYFRMYEKLAGMTGTADTEAYEFQEIYGLEVVVIPTNRPTQRKDLQDQIYKTGKERYDAVVRDIRDCYERGQPVLVGTTSIETSEYLSGLLDREQLPHQVLNAKQHAREAEIVAQAGRPKMITIATNMAGRGTDIVLGGNVEKQAGFIEADPNLSDADKAARIQQLKDEWQSLHEQVKAAGGLHIVGTERHESRRIDNQLRGRAGRQGDPGSSRFYLSLDDQLLRIFAGDRVRAIMERLKMPEGEPIEAGIVTRSIESAQRKVEGRNFDIRKQLLQYDDVANDQRKEIYKLRNDVLEANDVGEMVANLRESVLIELFRDHVPADTMEEQWNIAGLETRLREDWGLEVPLAKTIEGAQSIEDEELLNLIMKAATERYESKVAMVGRESFAGFERSVMLQSIDTHWREHLAALDHLRQGIHLRGYAQKDPKQEYKRESFELFARLLDVIKNEVTRVTFNVQIQSPEELEQASEQIEEGLSHLENVQYKHDEFAEGREPVEEAPSPRTGTAMAAAELALAGMPKVGRNDPCPCGSGKKFKQCHGKLS.

ATP contacts are provided by residues Q87, 105 to 109, and D515; that span reads GEGKT. Zn(2+) is bound by residues C909, C911, C920, and H921.

It belongs to the SecA family. As to quaternary structure, monomer and homodimer. Part of the essential Sec protein translocation apparatus which comprises SecA, SecYEG and auxiliary proteins SecDF-YajC and YidC. Requires Zn(2+) as cofactor.

The protein localises to the cell inner membrane. It is found in the cytoplasm. It catalyses the reaction ATP + H2O + cellular proteinSide 1 = ADP + phosphate + cellular proteinSide 2.. Part of the Sec protein translocase complex. Interacts with the SecYEG preprotein conducting channel. Has a central role in coupling the hydrolysis of ATP to the transfer of proteins into and across the cell membrane, serving both as a receptor for the preprotein-SecB complex and as an ATP-driven molecular motor driving the stepwise translocation of polypeptide chains across the membrane. The protein is Protein translocase subunit SecA of Cupriavidus taiwanensis (strain DSM 17343 / BCRC 17206 / CCUG 44338 / CIP 107171 / LMG 19424 / R1) (Ralstonia taiwanensis (strain LMG 19424)).